We begin with the raw amino-acid sequence, 122 residues long: Cupin 2 conserved barrel domain-containing protein (122 aa).

A cupin 2 conserved barrel region spans residues 55-119; the sequence is PGGVTTAEDH…DSPVEIVSIW (65 aa). Zn(2+)-binding residues include aspartate 63, histidine 65, glutamate 69, and histidine 103.

Requires Zn(2+) as cofactor.

The enzyme catalyses N(6)-hydroxy-L-lysine + L-glutamate + ATP = 1-L-glutamo-2-N(6-)L-lysinohydrazine + AMP + diphosphate + 2 H(+). Its activity is regulated as follows. Inhibited by 1,10-phenanthroline (OP). Its function is as follows. Catalyzes hydrazine (N-N) bond formation from an unstable ester intermediate, the product of the ATP-dependent condensation of L-N(6)-OH-lysine and L-glutamine substrates by a methionyl-tRNA synthase-like protein. The chain is Cupin 2 conserved barrel domain-containing protein from Rhodococcus jostii (strain RHA1).